The primary structure comprises 123 residues: Acidic phospholipase A2 (123 aa).

7 disulfide bridges follow: Cys26-Cys116, Cys28-Cys44, Cys43-Cys95, Cys49-Cys123, Cys50-Cys88, Cys57-Cys81, and Cys75-Cys86. Tyr27, Gly29, and Gly31 together coordinate Ca(2+). Residue His47 is part of the active site. Residue Asp48 coordinates Ca(2+). Residue Asp89 is part of the active site.

Belongs to the phospholipase A2 family. Group II subfamily. D49 sub-subfamily. Homodimer. It depends on Ca(2+) as a cofactor. In terms of tissue distribution, expressed by the venom gland.

It is found in the secreted. It carries out the reaction a 1,2-diacyl-sn-glycero-3-phosphocholine + H2O = a 1-acyl-sn-glycero-3-phosphocholine + a fatty acid + H(+). Snake venom phospholipase A2 (PLA2) that inhibits ADP-induced platelet aggregation. PLA2 catalyzes the calcium-dependent hydrolysis of the 2-acyl groups in 3-sn-phosphoglycerides. This is Acidic phospholipase A2 from Deinagkistrodon acutus (Hundred-pace snake).